The chain runs to 483 residues: Uridine/cytidine kinase UKL1, chloroplastic (483 aa).

The transit peptide at 1–47 (MPEDSTAIDYVMEKASGPHFSGLRLDGLLSSPSKSSVSSPSHFRLSN) directs the protein to the chloroplast. Residues 59–264 (PHQPFVIGVT…IVQHIHTKLG (206 aa)) are uridine kinase. A uracil phosphoribosyltransferase region spans residues 274–483 (NVFVIETTFQ…FGDRYFGTDE (210 aa)). GTP is bound by residues Lys-298, Arg-307, and 341–344 (CKKL). 5-phospho-alpha-D-ribose 1-diphosphate-binding residues include Arg-351 and Arg-376. Arg-396 serves as a coordination point for GTP. 5-phospho-alpha-D-ribose 1-diphosphate is bound by residues Asp-402, 407–410 (TGNS), and Glu-473. 472–474 (GEF) is a uracil binding site.

This sequence in the N-terminal section; belongs to the uridine kinase family. In the C-terminal section; belongs to the UPRTase family.

The protein resides in the plastid. Its subcellular location is the chloroplast. It carries out the reaction cytidine + ATP = CMP + ADP + H(+). The enzyme catalyses uridine + ATP = UMP + ADP + H(+). The protein operates within pyrimidine metabolism; CTP biosynthesis via salvage pathway; CTP from cytidine: step 1/3. It participates in pyrimidine metabolism; UMP biosynthesis via salvage pathway; UMP from uridine: step 1/1. Involved in the pyrimidine salvage pathway. Phosphorylates uridine to uridine monophosphate (UMP). Phosphorylates cytidine to cytidine monophosphate (CMP). Does not possess uracil phosphoribosyltransferase (UPRTase) activity that catalyzes the conversion of uracil and 5-phospho-alpha-D-ribose 1-diphosphate (PRPP) to UMP and diphosphate. The sequence is that of Uridine/cytidine kinase UKL1, chloroplastic from Arabidopsis thaliana (Mouse-ear cress).